The following is a 178-amino-acid chain: Tetratricopeptide repeat protein 9C (178 aa).

TPR repeat units follow at residues 15–48, 79–114, and 115–148; these read ASSF…LRSL, ADCY…QPEN, and VKAL…APKD.

Belongs to the TTC9 family.

The polypeptide is Tetratricopeptide repeat protein 9C (ttc9c) (Xenopus tropicalis (Western clawed frog)).